The following is a 428-amino-acid chain: Enolase (428 aa).

Glutamine 163 provides a ligand contact to (2R)-2-phosphoglycerate. Glutamate 205 (proton donor) is an active-site residue. Aspartate 242, glutamate 285, and aspartate 311 together coordinate Mg(2+). 4 residues coordinate (2R)-2-phosphoglycerate: lysine 336, arginine 365, serine 366, and lysine 387. The active-site Proton acceptor is lysine 336.

The protein belongs to the enolase family. Mg(2+) serves as cofactor.

It localises to the cytoplasm. The protein localises to the secreted. Its subcellular location is the cell surface. The catalysed reaction is (2R)-2-phosphoglycerate = phosphoenolpyruvate + H2O. Its pathway is carbohydrate degradation; glycolysis; pyruvate from D-glyceraldehyde 3-phosphate: step 4/5. Functionally, catalyzes the reversible conversion of 2-phosphoglycerate (2-PG) into phosphoenolpyruvate (PEP). It is essential for the degradation of carbohydrates via glycolysis. The polypeptide is Enolase (Desulfatibacillum aliphaticivorans).